The following is a 340-amino-acid chain: MTSLIGTHSGKFHCDEAFACFMLKQLPQFKDHSILRTRDAAQLEKCDIIVDVGGIFDHSKQRYDHHQRGFTDTMRTLEKLNFDTKLSSAGLVYAHYGREVINQILGGNVSSSMIDLFYHRLYEQFVESIDAIDNGISQYDGVPRYHSSGNLSSRTGQFNSHWNEPENDADERFQQAMQFIGEEFSRSVKYLANVWWPAREIIEAAVDKRFEIDASGRIILIENGGCPWKEHFFDIEVEKNIADDNITYILFSDSTNASWRVQAIPVDKMSSFENRMPLPAAWRGLRDDDLSKESGIPGGVFVHISGFIGGNLTREGAIAMARKALEIGEENPVKKAKLGN.

The protein belongs to the MYG1 family.

The polypeptide is MYG1 protein C27H6.8 (Caenorhabditis elegans).